Consider the following 268-residue polypeptide: 3-methyl-2-oxobutanoate hydroxymethyltransferase (268 aa).

Residues Asp46 and Asp85 each coordinate Mg(2+). Residues 46–47 (DS), Asp85, and Lys114 each bind 3-methyl-2-oxobutanoate. Glu116 contributes to the Mg(2+) binding site. Catalysis depends on Glu183, which acts as the Proton acceptor.

The protein belongs to the PanB family. As to quaternary structure, homodecamer; pentamer of dimers. Mg(2+) serves as cofactor.

It is found in the cytoplasm. The enzyme catalyses 3-methyl-2-oxobutanoate + (6R)-5,10-methylene-5,6,7,8-tetrahydrofolate + H2O = 2-dehydropantoate + (6S)-5,6,7,8-tetrahydrofolate. It functions in the pathway cofactor biosynthesis; coenzyme A biosynthesis. Functionally, catalyzes the reversible reaction in which hydroxymethyl group from 5,10-methylenetetrahydrofolate is transferred onto alpha-ketoisovalerate to form ketopantoate. The protein is 3-methyl-2-oxobutanoate hydroxymethyltransferase of Sulfolobus acidocaldarius (strain ATCC 33909 / DSM 639 / JCM 8929 / NBRC 15157 / NCIMB 11770).